Here is a 339-residue protein sequence, read N- to C-terminus: MYQLFRHGIFQMDAEKAHNFTIQCLKLAGNPLFQPILKSLIHAPKGFPKTVMGVNFPNPIGLAAGADKNGDAIDGFGALGFGFLELGTVTPVAQDGNAKPRQFRLIEAEGIINRNGFNNNGIDYLIENVKNARYKGVIGINIGKNKFTSLEQGKDDYIFCLNKAYNYAGYITVNISSPNTPDLRQLQYGDYFDDLLRSIKDRQAILANQYNKYVPIAVKIAPDLTESELVQIADTLVRHKMDGVIATNTTISRDTVTGMKNAEQQGGLSGKPLQHKSTEIIKRLHQELKGQIPIIGSGGIDGLQNAQEKIEAGAELLQVYSGLIYHGPKLVKELVKNIK.

Residues alanine 64–lysine 68 and threonine 88 contribute to the FMN site. Lysine 68 lines the substrate pocket. Asparagine 113–phenylalanine 117 provides a ligand contact to substrate. FMN-binding residues include asparagine 141 and asparagine 174. Residue asparagine 174 coordinates substrate. Serine 177 (nucleophile) is an active-site residue. Residue asparagine 179 coordinates substrate. Lysine 219 and threonine 247 together coordinate FMN. Asparagine 248–threonine 249 lines the substrate pocket. Residues glycine 270, glycine 299, and tyrosine 320–serine 321 contribute to the FMN site.

Belongs to the dihydroorotate dehydrogenase family. Type 2 subfamily. Monomer. FMN serves as cofactor.

Its subcellular location is the cell membrane. The enzyme catalyses (S)-dihydroorotate + a quinone = orotate + a quinol. Its pathway is pyrimidine metabolism; UMP biosynthesis via de novo pathway; orotate from (S)-dihydroorotate (quinone route): step 1/1. In terms of biological role, catalyzes the conversion of dihydroorotate to orotate with quinone as electron acceptor. The chain is Dihydroorotate dehydrogenase (quinone) (pyrD) from Haemophilus influenzae (strain ATCC 51907 / DSM 11121 / KW20 / Rd).